The primary structure comprises 230 residues: Orotidine 5'-phosphate decarboxylase (230 aa).

Substrate is bound by residues aspartate 11, lysine 34, 61–70, threonine 117, arginine 179, glutamine 188, glycine 208, and arginine 209; that span reads DLKLHDIPNT. The Proton donor role is filled by lysine 63.

It belongs to the OMP decarboxylase family. Type 1 subfamily. As to quaternary structure, homodimer.

It carries out the reaction orotidine 5'-phosphate + H(+) = UMP + CO2. Its pathway is pyrimidine metabolism; UMP biosynthesis via de novo pathway; UMP from orotate: step 2/2. In terms of biological role, catalyzes the decarboxylation of orotidine 5'-monophosphate (OMP) to uridine 5'-monophosphate (UMP). The protein is Orotidine 5'-phosphate decarboxylase of Streptococcus pyogenes serotype M6 (strain ATCC BAA-946 / MGAS10394).